The following is a 1148-amino-acid chain: MSVPDYMQCAEDHQTLLVVVQPVGIVSEENFFRIYKRICSVSQISVRDSQRVLYIRYRHHYPPENNEWGDFQTHRKVVGLITITDCFSAKDWPQTFEKFHVQKEIYGSTLYDSRLFVFGLQGEIVEQPRTDVAFYPNYEDCQTVEKRIEDFIESLFIVLESKRLDRATDKSGDKIPLLCVPFEKKDFVGLDTDSRHYKKRCQGRMRKHVGDLCLQAGMLQDSLVHYHMSVELLRSVNDFLWLGAALEGLCSASVIYHYPGGTGGKSGARRFQGSTLPAEAANRHRPGAQEVLIDPGALTTNGINPDTSTEIGRAKNCLSPEDIIDKYKEAISYYSKYKNAGVIELEACIKAVRVLAIQKRSMEASEFLQNAVYINLRQLSEEEKIQRYSILSELYELIGFHRKSAFFKRVAAMQCVAPSIAEPGWRACYKLLLETLPGYSLSLDPKDFSRGTHRGWAAVQMRLLHELVYASRRMGNPALSVRHLSFLLQTMLDFLSDQEKKDVAQSLENYTSKCPGTMEPIALPGGLTLPPVPFTKLPIVRHVKLLNLPASLRPHKMKSLLGQNVSTKSPFIYSPIIAHNRGEERNKKIDFQWVQGDVCEVQLMVYNPMPFELRVENMGLLTSGVEFESLPAALSLPAESGLYPVTLVGVPQTTGTITVNGYHTTVFGVFSDCLLDNLPGIKTSGSTVEVIPALPRLQISTSLPRSAHSLQPSSGDEISTNVSVQLYNGESQQLIIKLENIGMEPLEKLEVTSKVLTTKEKLYGDFLSWKLEETLAQFPLQPGKVATFTINIKVKLDFSCQENLLQDLSDDGISVSGFPLSSPFRQVVRPRVEGKPVNPPESNKAGDYSHVKTLEAVLNFKYSGGPGHTEGYYRNLSLGLHVEVEPSVFFTRVSTLPATSTRQCHLLLDVFNSTEHELTVSTRSSEALILHAGECQRMAIQVDKFNFESFPESPGEKGQFANPKQLEEERREARGLEIHSKLGICWRIPSLKRSGEASVEGLLNQLVLEHLQLAPLQWDVLVDGQPCDREAVAACQVGDPVRLEVRLTNRSPRSVGPFALTVVPFQDHQNGVHNYDLHDTVSFVGSSTFYLDAVQPSGQSACLGALLFLYTGDFFLHIRFHEDSTSKELPPSWFCLPSVHVCALEAQA.

A phosphoserine mark is found at Ser-566 and Ser-953.

The protein belongs to the NIBP family. Component of the multisubunit TRAPP (transport protein particle) complex, which includes at least TRAPPC2, TRAPPC2L, TRAPPC3, TRAPPC3L, TRAPPC4, TRAPPC5, TRAPPC8, TRAPPC9, TRAPPC10, TRAPPC11 and TRAPPC12. Directly interacts with IKBKB and MAP3K14. As to expression, expressed at high levels in muscle and kidney and to a lower extent in brain, heart and placenta.

Its subcellular location is the golgi apparatus. It localises to the cis-Golgi network. The protein resides in the endoplasmic reticulum. It is found in the cytoplasm. Its function is as follows. Functions as an activator of NF-kappa-B through increased phosphorylation of the IKK complex. May function in neuronal cells differentiation. May play a role in vesicular transport from endoplasmic reticulum to Golgi. The chain is Trafficking protein particle complex subunit 9 (TRAPPC9) from Homo sapiens (Human).